Here is a 281-residue protein sequence, read N- to C-terminus: Inositol diphosphatase SIW14 (281 aa).

The segment at 1-20 is disordered; sequence MGLYQAKNDEGSDPKSSSKI. Positions 7–20 are enriched in basic and acidic residues; it reads KNDEGSDPKSSSKI. Ser94 is modified (phosphoserine). One can recognise a Tyrosine-protein phosphatase domain in the interval 121 to 271; the sequence is NFSHVVGEIY…YDDDEIKRIA (151 aa). Positions 189, 190, and 193 each coordinate 1D-myo-inositol hexakisphosphate. The active-site Phosphocysteine intermediate is Cys214.

Belongs to the protein-tyrosine phosphatase family. Atypical dual-specificity phosphatase Siw14-like subfamily. In terms of assembly, monomer.

It localises to the cytoplasm. It catalyses the reaction 5-diphospho-1D-myo-inositol 1,2,3,4,6-pentakisphosphate + H2O = 1D-myo-inositol hexakisphosphate + phosphate + H(+). The enzyme catalyses 5-diphospho-1D-myo-inositol 1,3,4,6-tetrakisphosphate + H2O = 1D-myo-inositol 1,3,4,5,6-pentakisphosphate + phosphate + H(+). The catalysed reaction is 3,5-bis(diphospho)-1D-myo-inositol 1,2,4,6-tetrakisphosphate + H2O = 3-diphospho-1D-myo-inositol 1,2,4,5,6-pentakisphosphate + phosphate + 2 H(+). It carries out the reaction 1,5-bis(diphospho)-1D-myo-inositol 2,3,4,6-tetrakisphosphate + H2O = 1-diphospho-1D-myo-inositol 2,3,4,5,6-pentakisphosphate + phosphate + 2 H(+). It catalyses the reaction 6-diphospho-1D-myo-inositol pentakisphosphate + H2O = 1D-myo-inositol hexakisphosphate + phosphate + H(+). Its function is as follows. Selectively cleaves the beta-phosphate at the 5-position of soluble inositol pyrophosphates. Converts 5-diphosphoinositol tetrakisphosphate (5-PP-InsP(4)) into inositol pentakisphosphate (InsP(5)), 5-diphosphoinositol pentakisphosphate (5-PP-IP(5) or 5-InsP(7)) into inositol hexakisphosphate (IP(6) or InsP(6)), and 1,5-bisdiphosphoinositol tetrakisphosphate (1,5-PP-IP(5) or InsP(8)) into 1-diphosphoinositol pentakisphosphate (1-PP-IP(5) or 1-InsP(7)). Also has activity on 1,5-bis-diphosphoinositol 2,3,4,6-tetrakisphosphate (1,5-InsP(8)) and 3,5-InsP(8). Modulates inositol pyrophosphate metabolism that may have an influence in stress response. Plays a role in actin filament organization and endocytosis. Functions as a prion suppressing factor possibly due to its phosphatase activity against inositol pyrophosphates, which are signal transduction molecules involved in prion propagation. The chain is Inositol diphosphatase SIW14 (SIW14) from Saccharomyces cerevisiae (strain ATCC 204508 / S288c) (Baker's yeast).